Here is a 246-residue protein sequence, read N- to C-terminus: Ribonuclease PH (246 aa).

Phosphate-binding positions include arginine 86 and glycine 124 to arginine 126.

Belongs to the RNase PH family. In terms of assembly, homohexameric ring arranged as a trimer of dimers.

The catalysed reaction is tRNA(n+1) + phosphate = tRNA(n) + a ribonucleoside 5'-diphosphate. Its function is as follows. Phosphorolytic 3'-5' exoribonuclease that plays an important role in tRNA 3'-end maturation. Removes nucleotide residues following the 3'-CCA terminus of tRNAs; can also add nucleotides to the ends of RNA molecules by using nucleoside diphosphates as substrates, but this may not be physiologically important. Probably plays a role in initiation of 16S rRNA degradation (leading to ribosome degradation) during starvation. This chain is Ribonuclease PH, found in Bacillus licheniformis (strain ATCC 14580 / DSM 13 / JCM 2505 / CCUG 7422 / NBRC 12200 / NCIMB 9375 / NCTC 10341 / NRRL NRS-1264 / Gibson 46).